Reading from the N-terminus, the 375-residue chain is MSKRDYYDVLGVNRDASDDDIKKAYRKLAMKYHPDRNPDSKEAEDKFKEVKEAYEILSDSQKRGAYDQFGHAGVDPQAGMGGGGQGFGGFGDFADIFSDIFGGGRGGSGGGRSNVYRGADLRYNMEITLEEAARGCEKQIRIPSHESCSTCNGTGAKPGTQPKTCATCGGHGQVRMSQGFFSIQQTCPTCHGTGKQITDPCGSCHGAGQKKTTKTLNVKIPAGVDEGDRIRLGGEGEPGQNGGPAGDLYVVTHIKQHAVFQRDGMDLHCEMPISFSTAALGGEVEIPTLDGMAKVKISPETQSGRVYRLRGKGVKAVRGAEYGDLHCHVVVETPVKLTERQKELLREFEAISQGDVATHNPRSKSFMDKLRDFFE.

Positions 5 to 70 (DYYDVLGVNR…QKRGAYDQFG (66 aa)) constitute a J domain. The segment at 135–213 (GCEKQIRIPS…CHGAGQKKTT (79 aa)) adopts a CR-type zinc-finger fold. Residues C148, C151, C165, C168, C187, C190, C201, and C204 each contribute to the Zn(2+) site. 4 CXXCXGXG motif repeats span residues 148–155 (CSTCNGTG), 165–172 (CATCGGHG), 187–194 (CPTCHGTG), and 201–208 (CGSCHGAG).

It belongs to the DnaJ family. As to quaternary structure, homodimer. Zn(2+) is required as a cofactor.

Its subcellular location is the cytoplasm. In terms of biological role, participates actively in the response to hyperosmotic and heat shock by preventing the aggregation of stress-denatured proteins and by disaggregating proteins, also in an autonomous, DnaK-independent fashion. Unfolded proteins bind initially to DnaJ; upon interaction with the DnaJ-bound protein, DnaK hydrolyzes its bound ATP, resulting in the formation of a stable complex. GrpE releases ADP from DnaK; ATP binding to DnaK triggers the release of the substrate protein, thus completing the reaction cycle. Several rounds of ATP-dependent interactions between DnaJ, DnaK and GrpE are required for fully efficient folding. Also involved, together with DnaK and GrpE, in the DNA replication of plasmids through activation of initiation proteins. In Chromobacterium violaceum (strain ATCC 12472 / DSM 30191 / JCM 1249 / CCUG 213 / NBRC 12614 / NCIMB 9131 / NCTC 9757 / MK), this protein is Chaperone protein DnaJ.